A 449-amino-acid chain; its full sequence is Transport protein ComB (449 aa).

Residues Met1–Ser20 lie on the Cytoplasmic side of the membrane. A helical membrane pass occupies residues Ser21–Ala41. Residues Glu42–Glu449 are Extracellular-facing.

It belongs to the membrane fusion protein (MFP) (TC 8.A.1) family.

Its subcellular location is the cell membrane. In terms of biological role, required for induction of competence. In Streptococcus pneumoniae (strain ATCC BAA-255 / R6), this protein is Transport protein ComB (comB).